The primary structure comprises 926 residues: Rap guanine nucleotide exchange factor 3 (926 aa).

Position 79 is a phosphoserine (serine 79). A DEP domain is found at 110-186; sequence ATYPTLIRDR…RDAQFYRFPG (77 aa). The tract at residues 218 to 242 is interaction with PDE3B; sequence TVALRKSPGQRTDEELDLIFEELVH. 3',5'-cyclic AMP is bound by residues 311-314 and 321-322; these read GQLA and RA. Residues 369-388 form a disordered region; the sequence is TSQGAGPSRPPTPGRNRYTV. The region spanning 384–521 is the N-terminal Ras-GEF domain; that stretch reads NRYTVMSGTP…EQYPERRRHH (138 aa). Residues 398-422 are interaction with PDE3B; the sequence is ELLLEAMRPDSSAHDPTETFLSDFL. A phosphoserine mark is found at serine 531 and serine 867. One can recognise a Ras-GEF domain in the interval 665–892; that stretch reads SAKDLAGQLT…SRISTCSEQS (228 aa).

As to quaternary structure, interacts with PDE3B and PIK3R6; form a signaling complex that regulates phosphatidylinositol 3-kinase gamma in angiogenesis. Expressed at low levels in adult brain. Strongly expressed in parts of the neonatal brain, including the septum and the thalamus.

Its subcellular location is the cytoplasm. It is found in the membrane. Functionally, guanine nucleotide exchange factor (GEF) for RAP1A and RAP2A small GTPases that is activated by binding cAMP. Through simultaneous binding of PDE3B to RAPGEF3 and PIK3R6 is assembled in a signaling complex in which it activates the PI3K gamma complex and which is involved in angiogenesis. Plays a role in the modulation of the cAMP-induced dynamic control of endothelial barrier function through a pathway that is independent on Rho-mediated signaling. Required for the actin rearrangement at cell-cell junctions, such as stress fibers and junctional actin. The protein is Rap guanine nucleotide exchange factor 3 (Rapgef3) of Rattus norvegicus (Rat).